The sequence spans 290 residues: Ribosomal RNA small subunit methyltransferase A (290 aa).

Residues N27, L29, G54, E75, D100, and N125 each contribute to the S-adenosyl-L-methionine site.

The protein belongs to the class I-like SAM-binding methyltransferase superfamily. rRNA adenine N(6)-methyltransferase family. RsmA subfamily.

The protein localises to the cytoplasm. The catalysed reaction is adenosine(1518)/adenosine(1519) in 16S rRNA + 4 S-adenosyl-L-methionine = N(6)-dimethyladenosine(1518)/N(6)-dimethyladenosine(1519) in 16S rRNA + 4 S-adenosyl-L-homocysteine + 4 H(+). Its function is as follows. Specifically dimethylates two adjacent adenosines (A1518 and A1519) in the loop of a conserved hairpin near the 3'-end of 16S rRNA in the 30S particle. May play a critical role in biogenesis of 30S subunits. The chain is Ribosomal RNA small subunit methyltransferase A from Streptococcus thermophilus (strain ATCC BAA-491 / LMD-9).